The primary structure comprises 502 residues: Mannitol 2-dehydrogenase (502 aa).

NAD(+) is bound at residue 37–48 (IVHIGVGGFHRA).

Belongs to the mannitol dehydrogenase family. As to quaternary structure, monomer.

It carries out the reaction D-mannitol + NAD(+) = D-fructose + NADH + H(+). Functionally, catalyzes the NAD(H)-dependent interconversion of D-fructose and D-mannitol in the mannitol metabolic pathway. The chain is Mannitol 2-dehydrogenase from Neosartorya fischeri (strain ATCC 1020 / DSM 3700 / CBS 544.65 / FGSC A1164 / JCM 1740 / NRRL 181 / WB 181) (Aspergillus fischerianus).